The following is a 591-amino-acid chain: Dolichyl-phosphooligosaccharide-protein glycotransferase 1 (591 aa).

The Cytoplasmic segment spans residues 1 to 5; the sequence is MDRKV. The chain crosses the membrane as a helical span at residues 6–26; it reads LMLAVILFALAVRFQNFGEIF. The Extracellular segment spans residues 27-67; the sequence is DSGIYYTGYDSYYHMRLVEVMVKESFRPDYDYYINYPFGLK. Residues 34–36 carry the DXD motif 1 motif; that stretch reads GYD. Aspartate 36 serves as a coordination point for Mn(2+). A helical transmembrane segment spans residues 68 to 88; the sequence is ITWPPLFDYILAFPGMLFGFH. Residues 89–91 are Cytoplasmic-facing; it reads SSE. The chain crosses the membrane as a helical span at residues 92 to 112; the sequence is IFAVFLPVILGVLSVVLICLT. At 113–121 the chain is on the extracellular side; it reads ALQIVNNQT. Residues 122-142 traverse the membrane as a helical segment; the sequence is FALISAFIYAAAPVAVWKTVL. Residues 143–147 are Cytoplasmic-facing; sequence GQADH. Aspartate 146 provides a ligand contact to Mn(2+). Residues 146–148 carry the DXD motif 2 motif; that stretch reads DHH. Histidine 147 is an a glycophospholipid binding site. Position 148 (histidine 148) interacts with Mn(2+). A helical membrane pass occupies residues 148–168; the sequence is HALVIFLFLLSAYLLLKDGVW. Lysine 169 is a topological domain (extracellular). A helical membrane pass occupies residues 170–190; it reads ILAGLPMLFMALAWLGSPIYG. Residues 191 to 219 lie on the Cytoplasmic side of the membrane; sequence ALLAFSALVHFDRKALRLVAASYLIPAIS. Residues 220 to 240 form a helical membrane-spanning segment; the sequence is FVLYPPVGISFFGLAAFLFVG. Residues 241–252 lie on the Extracellular side of the membrane; sequence SVVKGYEDRFRN. The chain crosses the membrane as a helical span at residues 253–273; that stretch reads ATIYYIALSLATVLIIYFIPL. The Cytoplasmic segment spans residues 274-275; it reads PH. Residues 276–296 form a helical membrane-spanning segment; the sequence is FEFVKGGINYIFGANIYLPTI. The TIXE motif motif lies at 295–298; sequence TISE. The Extracellular segment spans residues 297–303; the sequence is SEARSLQ. Residues 304–324 traverse the membrane as a helical segment; the sequence is IFEIISASGYIYFIFALISVL. Topologically, residues 325 to 327 are cytoplasmic; sequence FFR. The chain crosses the membrane as a helical span at residues 328–344; sequence NRFVLSMFFLSFILALM. Topologically, residues 345–347 are extracellular; that stretch reads QLR. Arginine 347 provides a ligand contact to a glycophospholipid. The chain crosses the membrane as a helical span at residues 348–368; it reads FTEVLVVPSALLSAYLVSLVL. The Cytoplasmic portion of the chain corresponds to 369 to 408; that stretch reads ERLEYPVFEKADEEEKSRRRKRKDRKVKQKNAEVEWKDHA. A helical transmembrane segment spans residues 409–429; that stretch reads VVAAFLVILAIPCIVVAVVPF. Residues 430-591 are Extracellular-facing; sequence DLTEDWKEAL…DVKIFEVVGS (162 aa). Residues 465–467 form an interacts with target acceptor peptide in protein substrate region; sequence WWD. The WWDYG motif motif lies at 465 to 469; sequence WWDYG. The DKi motif motif lies at 521–535; the sequence is EITMKDANNTKFPAI.

This sequence belongs to the STT3 family. Requires Mn(2+) as cofactor. It depends on Mg(2+) as a cofactor. Zn(2+) serves as cofactor.

The protein resides in the cell membrane. It carries out the reaction an archaeal dolichyl phosphooligosaccharide + [protein]-L-asparagine = an archaeal dolichyl phosphate + a glycoprotein with the oligosaccharide chain attached by N-beta-D-glycosyl linkage to a protein L-asparagine.. The protein operates within protein modification; protein glycosylation. In terms of biological role, oligosaccharyl transferase (OST) that catalyzes the initial transfer of a defined glycan (a GalNAc-linked heptasaccharide composed of 4 Hex, 3 dHex and a sulfate for A.fulgidus AglB-S) from the lipid carrier dolichol-monophosphate to an asparagine residue within an Asn-X-Ser/Thr consensus motif in nascent polypeptide chains, the first step in protein N-glycosylation. In Archaeoglobus fulgidus (strain ATCC 49558 / DSM 4304 / JCM 9628 / NBRC 100126 / VC-16), this protein is Dolichyl-phosphooligosaccharide-protein glycotransferase 1 (aglB1).